An 847-amino-acid polypeptide reads, in one-letter code: Cancer-associated gene 1 protein homolog (847 aa).

Residues 118–161 are disordered; it reads EEKPELQSQVYNDPADASQKPDPLKEESLMESSTSENKDELVHE. The stretch at 377–567 forms a coiled coil; the sequence is NVILEKNDIN…AAKREAQACT (191 aa).

This Rattus norvegicus (Rat) protein is Cancer-associated gene 1 protein homolog (Cage1).